The chain runs to 228 residues: DNA mismatch repair protein MutH (228 aa).

Belongs to the MutH family.

Its subcellular location is the cytoplasm. Sequence-specific endonuclease that cleaves unmethylated GATC sequences. It is involved in DNA mismatch repair. The protein is DNA mismatch repair protein MutH of Yersinia pseudotuberculosis serotype O:1b (strain IP 31758).